A 299-amino-acid chain; its full sequence is MPT51/MPB51 antigen (299 aa).

The signal sequence occupies residues 1 to 26 (MKGRSALLRALWIAALSFGLGGVAVA).

This sequence belongs to the mycobacterial A85 antigen family. Homodimer.

It is found in the secreted. May have a role in host tissue attachment, whereby ligands may include the serum protein fibronectin and small sugars. This chain is MPT51/MPB51 antigen (mpt51), found in Mycobacterium bovis (strain ATCC BAA-935 / AF2122/97).